A 333-amino-acid polypeptide reads, in one-letter code: Homeobox protein engrailed-2 (333 aa).

Disordered regions lie at residues 1–49, 95–206, and 223–250; these read MEEN…RALM, GRGG…GANL, and SDRP…PRTA. 2 stretches are compositionally biased toward gly residues: residues 25–36 and 95–117; these read PGGGSGGGGGSS and GRGG…GAGG. 2 stretches are compositionally biased toward low complexity: residues 142-151 and 191-200; these read PLPAAGSDSP and LSVSSDSDSS. Positions 244–303 form a DNA-binding region, homeobox; it reads DKRPRTAFTAEQLQRLKAEFQTNRYLTEQRRQSLAQELSLNESQIKIWFQNKRAKIKKAT.

This sequence belongs to the engrailed homeobox family.

The protein localises to the nucleus. The sequence is that of Homeobox protein engrailed-2 (EN2) from Homo sapiens (Human).